Consider the following 417-residue polypeptide: Serine hydroxymethyltransferase (417 aa).

(6S)-5,6,7,8-tetrahydrofolate-binding positions include Leu112 and 116–118 (GHL). Lys221 carries the N6-(pyridoxal phosphate)lysine modification. Glu247 contributes to the (6S)-5,6,7,8-tetrahydrofolate binding site.

This sequence belongs to the SHMT family. As to quaternary structure, homodimer. Pyridoxal 5'-phosphate is required as a cofactor.

The protein resides in the cytoplasm. The catalysed reaction is (6R)-5,10-methylene-5,6,7,8-tetrahydrofolate + glycine + H2O = (6S)-5,6,7,8-tetrahydrofolate + L-serine. It participates in one-carbon metabolism; tetrahydrofolate interconversion. The protein operates within amino-acid biosynthesis; glycine biosynthesis; glycine from L-serine: step 1/1. Functionally, catalyzes the reversible interconversion of serine and glycine with tetrahydrofolate (THF) serving as the one-carbon carrier. This reaction serves as the major source of one-carbon groups required for the biosynthesis of purines, thymidylate, methionine, and other important biomolecules. Also exhibits THF-independent aldolase activity toward beta-hydroxyamino acids, producing glycine and aldehydes, via a retro-aldol mechanism. The chain is Serine hydroxymethyltransferase from Borreliella burgdorferi (strain ATCC 35210 / DSM 4680 / CIP 102532 / B31) (Borrelia burgdorferi).